Consider the following 91-residue polypeptide: UPF0386 protein CC_0226 (91 aa).

Belongs to the UPF0386 family.

In Caulobacter vibrioides (strain ATCC 19089 / CIP 103742 / CB 15) (Caulobacter crescentus), this protein is UPF0386 protein CC_0226.